Reading from the N-terminus, the 253-residue chain is Indole-3-glycerol phosphate synthase (253 aa).

The protein belongs to the TrpC family.

The catalysed reaction is 1-(2-carboxyphenylamino)-1-deoxy-D-ribulose 5-phosphate + H(+) = (1S,2R)-1-C-(indol-3-yl)glycerol 3-phosphate + CO2 + H2O. Its pathway is amino-acid biosynthesis; L-tryptophan biosynthesis; L-tryptophan from chorismate: step 4/5. This Bacillus thuringiensis (strain Al Hakam) protein is Indole-3-glycerol phosphate synthase.